We begin with the raw amino-acid sequence, 868 residues long: Pentatricopeptide repeat-containing protein At2g27610 (868 aa).

PPR repeat units lie at residues 57 to 91 (DRES…GMEM), 92 to 126 (DCSI…GFLD), 127 to 157 (DVSV…MKER), 158 to 192 (NVVT…GTQP), 193 to 227 (NSFT…GLDK), 228 to 258 (TIPV…TEVK), 259 to 293 (SVVT…YVRL), 294 to 328 (SESS…GFLF), 329 to 359 (DQNI…IGCV), 361 to 395 (NVVS…GVRP), 396 to 426 (NEFT…NYER), 427 to 457 (SSTV…IDDK), 458 to 492 (DIVA…GIKP), 493 to 528 (NEFT…RLDS), 529 to 559 (SLCV…QREK), 560 to 594 (DLVS…KVKM), 595 to 625 (DGVT…MVRD), and 631 to 661 (TKEH…MPNP). Positions 666–741 (IWRTILAACR…EPGYSWIEVK (76 aa)) are type E motif. The tract at residues 742–772 (NKTYSFLAGDRSHPLKDQIYMKLEDLSTRLK) is type E(+) motif. The interval 773–868 (DLGYEPDTSY…DGVCSCGDFW (96 aa)) is type DYW motif.

Belongs to the PPR family. PCMP-H subfamily.

In Arabidopsis thaliana (Mouse-ear cress), this protein is Pentatricopeptide repeat-containing protein At2g27610 (PCMP-H60).